The sequence spans 351 residues: UPF0252 protein MJECL39 (351 aa).

2 consecutive transmembrane segments (helical) span residues 58–78 (FITFFIIVGLVWAIFPEVWLW) and 91–111 (IIICCLYFIITIILFLFLCGV).

The protein belongs to the UPF0252 family.

Its subcellular location is the cell membrane. The polypeptide is UPF0252 protein MJECL39 (Methanocaldococcus jannaschii (strain ATCC 43067 / DSM 2661 / JAL-1 / JCM 10045 / NBRC 100440) (Methanococcus jannaschii)).